We begin with the raw amino-acid sequence, 104 residues long: Large ribosomal subunit protein uL24 (104 aa).

Belongs to the universal ribosomal protein uL24 family. Part of the 50S ribosomal subunit.

Functionally, one of two assembly initiator proteins, it binds directly to the 5'-end of the 23S rRNA, where it nucleates assembly of the 50S subunit. One of the proteins that surrounds the polypeptide exit tunnel on the outside of the subunit. In Shewanella baltica (strain OS223), this protein is Large ribosomal subunit protein uL24.